The chain runs to 237 residues: Ribosomal RNA large subunit methyltransferase E (237 aa).

S-adenosyl-L-methionine is bound by residues Gly76, Trp78, Asp99, Asp115, and Asp139. The active-site Proton acceptor is Lys179.

The protein belongs to the class I-like SAM-binding methyltransferase superfamily. RNA methyltransferase RlmE family.

The protein localises to the cytoplasm. It catalyses the reaction uridine(2552) in 23S rRNA + S-adenosyl-L-methionine = 2'-O-methyluridine(2552) in 23S rRNA + S-adenosyl-L-homocysteine + H(+). Its function is as follows. Specifically methylates the uridine in position 2552 of 23S rRNA at the 2'-O position of the ribose in the fully assembled 50S ribosomal subunit. The polypeptide is Ribosomal RNA large subunit methyltransferase E (Rhodopseudomonas palustris (strain TIE-1)).